The primary structure comprises 305 residues: Phosphoinositol dihydroceramide synthase (305 aa).

Positions 1–23 (MPSKKETLTVIVIMALFLLLTAA) are cleaved as a signal peptide. The N-palmitoyl cysteine moiety is linked to residue cysteine 24. Cysteine 24 is lipidated: S-diacylglycerol cysteine. Transmembrane regions (helical) follow at residues 41–61 (LFFA…FAIF), 117–137 (VFAG…GLCL), 149–169 (FALV…IHPA), 216–236 (FAAV…YAII), 241–261 (WYVI…AIYS), and 266–286 (IIDV…FEYG).

Its subcellular location is the membrane. It catalyses the reaction N-(2-hydroxy-fatty acyl)-dihydroceramide + a 1,2-diacyl-sn-glycero-3-phospho-(1D-myo-inositol) = inositol-1-phospho-N-(2-hydroxy-fatty acyl)-dihydroceramide + a 1,2-diacyl-sn-glycerol. Catalyzes the addition of a phosphorylinositol group onto dihydroceramide to form phosphoinositol dihydroceramide (PI-DHC), an essential step in sphingolipid biosynthesis. The sequence is that of Phosphoinositol dihydroceramide synthase from Bacteroides thetaiotaomicron (strain ATCC 29148 / DSM 2079 / JCM 5827 / CCUG 10774 / NCTC 10582 / VPI-5482 / E50).